The chain runs to 639 residues: Sodium-dependent phosphate transport protein 2A (639 aa).

At M1 to K103 the chain is on the cytoplasmic side. S14 and S34 each carry phosphoserine. Residues V104 to F125 traverse the membrane as a helical segment. Over Q126–N145 the chain is Extracellular. Residues P146–S163 form a helical membrane-spanning segment. Over S164 to T165 the chain is Cytoplasmic. A helical membrane pass occupies residues S166–I185. The Extracellular segment spans residues P186–D347. Disulfide bonds link C225-C522 and C306-C336. N-linked (GlcNAc...) asparagine glycosylation is found at N298, N323, and N330. Residues L348–V370 form a helical membrane-spanning segment. Residues K371–M412 lie on the Cytoplasmic side of the membrane. The helical transmembrane segment at T413–S436 threads the bilayer. Over I437–K466 the chain is Extracellular. The chain crosses the membrane as a helical span at residues L467–L487. The Cytoplasmic portion of the chain corresponds to W488–W513. Phosphothreonine; by PKC is present on T508. The helical transmembrane segment at F514 to S534 threads the bilayer. Over M535–R539 the chain is Extracellular. The helical transmembrane segment at A540–L561 threads the bilayer. At Q562–L639 the chain is on the cytoplasmic side. S607 carries the post-translational modification Phosphoserine. At T623 the chain carries Phosphothreonine. S625 is modified (phosphoserine).

The protein belongs to the SLC34A transporter family. Interacts via its C-terminal region with NHERF4. Interacts with NHERF1. Interacts with TMEM174; regulates SLC34A1 internalization by PTH and FGF23.

Its subcellular location is the apical cell membrane. The protein localises to the cell membrane. It catalyses the reaction 3 Na(+)(out) + phosphate(out) = 3 Na(+)(in) + phosphate(in). Functionally, involved in actively transporting phosphate into cells via Na(+) cotransport in the renal brush border membrane. The cotransport has a Na(+):Pi stoichiometry of 3:1 and is electrogenic. In Ovis aries (Sheep), this protein is Sodium-dependent phosphate transport protein 2A.